The chain runs to 49 residues: DNA-directed RNA polymerase subunit Rpo12 (49 aa).

The Zn(2+) site is built by C11, C27, and C30.

It belongs to the archaeal Rpo12/eukaryotic RPC10 RNA polymerase subunit family. Part of the RNA polymerase complex. It depends on Zn(2+) as a cofactor.

The protein resides in the cytoplasm. It is found in the chromosome. It carries out the reaction RNA(n) + a ribonucleoside 5'-triphosphate = RNA(n+1) + diphosphate. Its function is as follows. DNA-dependent RNA polymerase (RNAP) catalyzes the transcription of DNA into RNA using the four ribonucleoside triphosphates as substrates. This chain is DNA-directed RNA polymerase subunit Rpo12, found in Thermococcus kodakarensis (strain ATCC BAA-918 / JCM 12380 / KOD1) (Pyrococcus kodakaraensis (strain KOD1)).